The sequence spans 498 residues: ATP synthase subunit alpha 1 (498 aa).

It belongs to the ATPase alpha/beta chains family. F-type ATPases have 2 components, CF(1) - the catalytic core - and CF(0) - the membrane proton channel. CF(1) has five subunits: alpha(3), beta(3), gamma(1), delta(1), epsilon(1). CF(0) has three main subunits: a(1), b(2) and c(9-12). The alpha and beta chains form an alternating ring which encloses part of the gamma chain. CF(1) is attached to CF(0) by a central stalk formed by the gamma and epsilon chains, while a peripheral stalk is formed by the delta and b chains.

Its subcellular location is the cell membrane. The catalysed reaction is ATP + H2O + 4 H(+)(in) = ADP + phosphate + 5 H(+)(out). Produces ATP from ADP in the presence of a proton gradient across the membrane. The alpha chain is a regulatory subunit. This Listeria monocytogenes serotype 4b (strain F2365) protein is ATP synthase subunit alpha 1.